The chain runs to 201 residues: PLASMODESMATA CALLOSE-BINDING PROTEIN 1 (201 aa).

The signal sequence occupies residues 1–19 (MAALVLSLLLLSLAGHSSA). A disulfide bridge links C22 with C84. Over residues 107–141 (SASGSSGSTTVTPGTTNPKGSPTTTTLPGSGTNSP) the composition is skewed to low complexity. The interval 107–164 (SASGSSGSTTVTPGTTNPKGSPTTTTLPGSGTNSPYSGNPTNGVFGGNSTGGTTGTGI) is disordered. Positions 150-161 (VFGGNSTGGTTG) are enriched in gly residues. N-linked (GlcNAc...) asparagine glycosylation occurs at N154. S172 carries the GPI-anchor amidated serine lipid modification. Positions 173–201 (SAFALKNSSKLFICLLLIASSGFCSFLML) are cleaved as a propeptide — removed in mature form. The N-linked (GlcNAc...) asparagine glycan is linked to N179.

Post-translationally, contains two additional disulfide bonds. As to expression, expressed in the shoot apical region and in young leaves but also detected in the laminar and vasculature of mature leaves.

The protein localises to the cell membrane. Its subcellular location is the cell junction. The protein resides in the plasmodesma. Able to bind (1-&gt;3)-beta-D-glucans (laminarin). Probably involved in cell-to-cell trafficking regulation. The chain is PLASMODESMATA CALLOSE-BINDING PROTEIN 1 (PDCB1) from Arabidopsis thaliana (Mouse-ear cress).